The sequence spans 171 residues: Co-chaperone protein HscB homolog (171 aa).

Residues Asn2–Gln74 enclose the J domain.

Belongs to the HscB family. As to quaternary structure, interacts with HscA and stimulates its ATPase activity.

In terms of biological role, co-chaperone involved in the maturation of iron-sulfur cluster-containing proteins. Seems to help targeting proteins to be folded toward HscA. The protein is Co-chaperone protein HscB homolog of Vibrio atlanticus (strain LGP32) (Vibrio splendidus (strain Mel32)).